A 109-amino-acid polypeptide reads, in one-letter code: Iron-sulfur cluster assembly protein CyaY (109 aa).

This sequence belongs to the frataxin family.

Involved in iron-sulfur (Fe-S) cluster assembly. May act as a regulator of Fe-S biogenesis. This Shewanella baltica (strain OS155 / ATCC BAA-1091) protein is Iron-sulfur cluster assembly protein CyaY.